Here is a 1117-residue protein sequence, read N- to C-terminus: Mitochondrial protein cyt-4 (1117 aa).

One can recognise an RNB domain in the interval 561–916 (RQDFYTSTVY…LVHWQIQAAL (356 aa)). Residues 705 to 730 (VVLEVGTPPSAEDEAPTRKMTKPDEL) are disordered. Residues 719 to 730 (APTRKMTKPDEL) show a composition bias toward basic and acidic residues.

This sequence belongs to the RNR ribonuclease family. As to quaternary structure, homodimer.

It is found in the mitochondrion. Its function is as follows. Required for RNA 5'- and 3'-end processing and splicing. May act on the RNA processing enzymes directly, or it may act on other regulatory molecules, which influence the activity or synthesis of these enzymes. In Neurospora crassa (strain ATCC 24698 / 74-OR23-1A / CBS 708.71 / DSM 1257 / FGSC 987), this protein is Mitochondrial protein cyt-4 (cyt-4).